Reading from the N-terminus, the 614-residue chain is Pyrophosphate--fructose 6-phosphate 1-phosphotransferase subunit alpha 1 (614 aa).

It belongs to the phosphofructokinase type A (PFKA) family. PPi-dependent PFK group II subfamily. Clade 'Long' sub-subfamily. As to quaternary structure, tetramer of two alpha (regulatory) and two beta (catalytic) chains. Expressed in leaves, roots, and flowers (e.g. sepals, petals, stamen and gynoecium).

It localises to the cytoplasm. Its pathway is carbohydrate degradation; glycolysis; D-glyceraldehyde 3-phosphate and glycerone phosphate from D-glucose: step 3/4. Its activity is regulated as follows. Allosterically activated by fructose 2,6-bisphosphate. Regulatory subunit of pyrophosphate--fructose 6-phosphate 1-phosphotransferase. The sequence is that of Pyrophosphate--fructose 6-phosphate 1-phosphotransferase subunit alpha 1 from Arabidopsis thaliana (Mouse-ear cress).